A 333-amino-acid polypeptide reads, in one-letter code: Probable xyloglucan endotransglucosylase/hydrolase protein 27 (333 aa).

Residues 1 to 20 (METLSRLLVFMSLFSGLVSG) form the signal peptide. One can recognise a GH16 domain in the interval 21 to 223 (FALQNLPITS…YKYAPYIARF (203 aa)). Glu-108 acts as the Nucleophile in catalysis. Residue Glu-112 is the Proton donor of the active site. Xyloglucan-binding positions include Glu-112 and 125–127 (QTN). Residue Asn-131 is glycosylated (N-linked (GlcNAc...) asparagine). Xyloglucan-binding positions include 135 to 139 (HSGRE), 202 to 203 (KW), Gly-207, and Arg-282. An intrachain disulfide couples Cys-277 to Cys-290. Residues 311–333 (IPRRHRNGKHRSKRSRVDGTESI) are disordered. A compositionally biased stretch (basic residues) spans 312–324 (PRRHRNGKHRSKR).

This sequence belongs to the glycosyl hydrolase 16 family. XTH group 3 subfamily. In terms of processing, contains at least one intrachain disulfide bond essential for its enzymatic activity. In terms of tissue distribution, expressed in 7 day old seedlings, roots, hypocotyls, rosette leaves, internodes between nodes bearing axillary shoots, nodes bearing flowers, flower buds, anthers and siliques.

The protein resides in the secreted. It localises to the cell wall. Its subcellular location is the extracellular space. The protein localises to the apoplast. The enzyme catalyses breaks a beta-(1-&gt;4) bond in the backbone of a xyloglucan and transfers the xyloglucanyl segment on to O-4 of the non-reducing terminal glucose residue of an acceptor, which can be a xyloglucan or an oligosaccharide of xyloglucan.. Catalyzes xyloglucan endohydrolysis (XEH) and/or endotransglycosylation (XET). Cleaves and religates xyloglucan polymers, an essential constituent of the primary cell wall, and thereby participates in cell wall construction of growing tissues. Required for cell wall modification during the development of tracheary elements. The protein is Probable xyloglucan endotransglucosylase/hydrolase protein 27 (XTH27) of Arabidopsis thaliana (Mouse-ear cress).